We begin with the raw amino-acid sequence, 1019 residues long: Photoactivated adenylate cyclase subunit alpha-like protein 1224-5/1F (1019 aa).

In terms of domain architecture, BLUF 1 spans 55-148 (LRRLMYLSAS…GRMYGWWHLK (94 aa)). The Guanylate cyclase 1 domain occupies 204–332 (VVTVIYLVEF…DWINSASRIT (129 aa)). The BLUF 2 domain occupies 467–559 (LITLTYISQA…GVYGSPLDMT (93 aa)). The Guanylate cyclase 2 domain occupies 615–744 (VMLATAISSF…EVRARVLEVE (130 aa)). A disordered region spans residues 825 to 863 (NISCRGGNPPAGGIPTSPKVRPPGRTNSVSSYTPDPKQA).

It belongs to the adenylyl cyclase class-4/guanylyl cyclase family. In terms of assembly, heterotetramer of two alpha and two beta subunits.

Its subcellular location is the cell projection. The protein resides in the cilium. The protein localises to the flagellum. The protein is Photoactivated adenylate cyclase subunit alpha-like protein 1224-5/1F of Euglena gracilis.